A 435-amino-acid chain; its full sequence is Serine carboxypeptidase-like 14 (435 aa).

The first 23 residues, 1–23 (MGSWIPKLLLLQLVLLLTKHADS), serve as a signal peptide directing secretion. 3 cysteine pairs are disulfide-bonded: C82–C325, C246–C260, and C284–C291. N103 carries an N-linked (GlcNAc...) asparagine glycan. S178 is a catalytic residue. N344 carries N-linked (GlcNAc...) asparagine glycosylation. D360 is a catalytic residue. N376 carries N-linked (GlcNAc...) asparagine glycosylation. H413 is an active-site residue.

This sequence belongs to the peptidase S10 family. In terms of tissue distribution, expressed in senescent leaves.

It is found in the secreted. Its function is as follows. Probable carboxypeptidase. The sequence is that of Serine carboxypeptidase-like 14 (SCPL14) from Arabidopsis thaliana (Mouse-ear cress).